The primary structure comprises 354 residues: 3-isopropylmalate dehydrogenase (354 aa).

An NAD(+)-binding site is contributed by 76 to 87 (GPRWDGAKERPE). 4 residues coordinate substrate: Arg-94, Arg-104, Arg-130, and Asp-215. Mg(2+) is bound by residues Asp-215, Asp-239, and Asp-243. 273 to 285 (GSAPDIAGKNKAN) provides a ligand contact to NAD(+).

Belongs to the isocitrate and isopropylmalate dehydrogenases family. LeuB type 1 subfamily. Homodimer. Mg(2+) is required as a cofactor. Requires Mn(2+) as cofactor.

Its subcellular location is the cytoplasm. The catalysed reaction is (2R,3S)-3-isopropylmalate + NAD(+) = 4-methyl-2-oxopentanoate + CO2 + NADH. The protein operates within amino-acid biosynthesis; L-leucine biosynthesis; L-leucine from 3-methyl-2-oxobutanoate: step 3/4. Its function is as follows. Catalyzes the oxidation of 3-carboxy-2-hydroxy-4-methylpentanoate (3-isopropylmalate) to 3-carboxy-4-methyl-2-oxopentanoate. The product decarboxylates to 4-methyl-2 oxopentanoate. This Bacillus anthracis protein is 3-isopropylmalate dehydrogenase.